Reading from the N-terminus, the 421-residue chain is Ribosomal RNA large subunit methyltransferase G (421 aa).

The segment at 389–421 (EPELEQESDLNSKLDANTEVPHPQSALYGKPKA) is disordered.

This sequence belongs to the methyltransferase superfamily. RlmG family.

Its subcellular location is the cytoplasm. The catalysed reaction is guanosine(1835) in 23S rRNA + S-adenosyl-L-methionine = N(2)-methylguanosine(1835) in 23S rRNA + S-adenosyl-L-homocysteine + H(+). In terms of biological role, specifically methylates the guanine in position 1835 (m2G1835) of 23S rRNA. In Shewanella halifaxensis (strain HAW-EB4), this protein is Ribosomal RNA large subunit methyltransferase G.